The primary structure comprises 120 residues: Ribonuclease P protein component (120 aa).

It belongs to the RnpA family. Consists of a catalytic RNA component (M1 or rnpB) and a protein subunit.

The catalysed reaction is Endonucleolytic cleavage of RNA, removing 5'-extranucleotides from tRNA precursor.. In terms of biological role, RNaseP catalyzes the removal of the 5'-leader sequence from pre-tRNA to produce the mature 5'-terminus. It can also cleave other RNA substrates such as 4.5S RNA. The protein component plays an auxiliary but essential role in vivo by binding to the 5'-leader sequence and broadening the substrate specificity of the ribozyme. This chain is Ribonuclease P protein component, found in Chelativorans sp. (strain BNC1).